A 117-amino-acid polypeptide reads, in one-letter code: uncharacterized protein (117 aa).

Its subcellular location is the plastid. It localises to the chloroplast. This is an uncharacterized protein from Chlamydomonas reinhardtii (Chlamydomonas smithii).